A 427-amino-acid chain; its full sequence is Trigger factor (427 aa).

In terms of domain architecture, PPIase FKBP-type spans 163–248 (GDTVVIDFVG…IHEVKAKEVP (86 aa)).

Belongs to the FKBP-type PPIase family. Tig subfamily.

Its subcellular location is the cytoplasm. The enzyme catalyses [protein]-peptidylproline (omega=180) = [protein]-peptidylproline (omega=0). Functionally, involved in protein export. Acts as a chaperone by maintaining the newly synthesized protein in an open conformation. Functions as a peptidyl-prolyl cis-trans isomerase. The polypeptide is Trigger factor (Streptococcus pneumoniae serotype 2 (strain D39 / NCTC 7466)).